We begin with the raw amino-acid sequence, 316 residues long: Ribosomal RNA small subunit methyltransferase A (316 aa).

S-adenosyl-L-methionine-binding residues include Asn33, Val35, Gly60, Glu81, Asp110, and Asn133.

Belongs to the class I-like SAM-binding methyltransferase superfamily. rRNA adenine N(6)-methyltransferase family. RsmA subfamily.

The protein resides in the cytoplasm. It catalyses the reaction adenosine(1518)/adenosine(1519) in 16S rRNA + 4 S-adenosyl-L-methionine = N(6)-dimethyladenosine(1518)/N(6)-dimethyladenosine(1519) in 16S rRNA + 4 S-adenosyl-L-homocysteine + 4 H(+). In terms of biological role, specifically dimethylates two adjacent adenosines (A1518 and A1519) in the loop of a conserved hairpin near the 3'-end of 16S rRNA in the 30S particle. May play a critical role in biogenesis of 30S subunits. This chain is Ribosomal RNA small subunit methyltransferase A, found in Corynebacterium jeikeium (strain K411).